A 281-amino-acid polypeptide reads, in one-letter code: Small ribosomal subunit protein uS2 (281 aa).

It belongs to the universal ribosomal protein uS2 family.

The chain is Small ribosomal subunit protein uS2 (rpsB) from Chlamydia muridarum (strain MoPn / Nigg).